The primary structure comprises 168 residues: uncharacterized protein (168 aa).

Residues 19 to 80 form the HTH asnC-type domain; it reads LDKLDRHILN…VVSPKAVGRT (62 aa). The segment at residues 38–57 is a DNA-binding region (H-T-H motif); the sequence is LKELSEKVNSSVATCQRRVQ.

This is an uncharacterized protein from Haemophilus influenzae (strain ATCC 51907 / DSM 11121 / KW20 / Rd).